Reading from the N-terminus, the 705-residue chain is Polyribonucleotide nucleotidyltransferase (705 aa).

Mg(2+) contacts are provided by Asp-492 and Asp-498. One can recognise a KH domain in the interval 559 to 618 (PLMITMKVSPDKIRHIIGPGGKIINKIIDETGVEIDIDDDGSVYILAQDQESGNRAKEII). The 69-residue stretch at 628–696 (GDIYEGRVKK…ELGRINLSRK (69 aa)) folds into the S1 motif domain.

The protein belongs to the polyribonucleotide nucleotidyltransferase family. It depends on Mg(2+) as a cofactor.

The protein localises to the cytoplasm. It carries out the reaction RNA(n+1) + phosphate = RNA(n) + a ribonucleoside 5'-diphosphate. Its function is as follows. Involved in mRNA degradation. Catalyzes the phosphorolysis of single-stranded polyribonucleotides processively in the 3'- to 5'-direction. The protein is Polyribonucleotide nucleotidyltransferase of Halothermothrix orenii (strain H 168 / OCM 544 / DSM 9562).